The sequence spans 557 residues: Dihydroxy-acid dehydratase (557 aa).

Residue C50 coordinates [2Fe-2S] cluster. D82 serves as a coordination point for Mg(2+). C123 lines the [2Fe-2S] cluster pocket. The Mg(2+) site is built by D124 and K125. K125 is modified (N6-carboxylysine). C195 contributes to the [2Fe-2S] cluster binding site. E447 serves as a coordination point for Mg(2+). S473 acts as the Proton acceptor in catalysis.

It belongs to the IlvD/Edd family. As to quaternary structure, homodimer. It depends on [2Fe-2S] cluster as a cofactor. Mg(2+) is required as a cofactor.

The enzyme catalyses (2R)-2,3-dihydroxy-3-methylbutanoate = 3-methyl-2-oxobutanoate + H2O. It carries out the reaction (2R,3R)-2,3-dihydroxy-3-methylpentanoate = (S)-3-methyl-2-oxopentanoate + H2O. It functions in the pathway amino-acid biosynthesis; L-isoleucine biosynthesis; L-isoleucine from 2-oxobutanoate: step 3/4. Its pathway is amino-acid biosynthesis; L-valine biosynthesis; L-valine from pyruvate: step 3/4. In terms of biological role, functions in the biosynthesis of branched-chain amino acids. Catalyzes the dehydration of (2R,3R)-2,3-dihydroxy-3-methylpentanoate (2,3-dihydroxy-3-methylvalerate) into 2-oxo-3-methylpentanoate (2-oxo-3-methylvalerate) and of (2R)-2,3-dihydroxy-3-methylbutanoate (2,3-dihydroxyisovalerate) into 2-oxo-3-methylbutanoate (2-oxoisovalerate), the penultimate precursor to L-isoleucine and L-valine, respectively. This chain is Dihydroxy-acid dehydratase, found in Ralstonia nicotianae (strain ATCC BAA-1114 / GMI1000) (Ralstonia solanacearum).